The following is a 297-amino-acid chain: Aspartate carbamoyltransferase catalytic subunit (297 aa).

Positions 51 and 52 each coordinate carbamoyl phosphate. Lys79 serves as a coordination point for L-aspartate. Arg101, His129, and Gln132 together coordinate carbamoyl phosphate. Positions 162 and 216 each coordinate L-aspartate. Residues Gly257 and Pro258 each coordinate carbamoyl phosphate.

Belongs to the aspartate/ornithine carbamoyltransferase superfamily. ATCase family. Heterododecamer (2C3:3R2) of six catalytic PyrB chains organized as two trimers (C3), and six regulatory PyrI chains organized as three dimers (R2).

It carries out the reaction carbamoyl phosphate + L-aspartate = N-carbamoyl-L-aspartate + phosphate + H(+). It functions in the pathway pyrimidine metabolism; UMP biosynthesis via de novo pathway; (S)-dihydroorotate from bicarbonate: step 2/3. Functionally, catalyzes the condensation of carbamoyl phosphate and aspartate to form carbamoyl aspartate and inorganic phosphate, the committed step in the de novo pyrimidine nucleotide biosynthesis pathway. In Myxococcus xanthus (strain DK1622), this protein is Aspartate carbamoyltransferase catalytic subunit.